The following is a 738-amino-acid chain: Dipeptidyl peptidase 3 (738 aa).

An N-acetylalanine modification is found at alanine 2. Histidine 450 contacts Zn(2+). The active site involves glutamate 451. Histidine 455 and glutamate 508 together coordinate Zn(2+).

It belongs to the peptidase M49 family. Zn(2+) serves as cofactor.

Its subcellular location is the cytoplasm. The protein resides in the cytosol. It catalyses the reaction Release of an N-terminal dipeptide from a peptide comprising four or more residues, with broad specificity. Also acts on dipeptidyl 2-naphthylamides.. Cleaves and degrades bioactive peptides, including angiotensin, Leu-enkephalin and Met-enkephalin. Also cleaves Arg-Arg-beta-naphthylamide (in vitro). This chain is Dipeptidyl peptidase 3 (Dpp3), found in Mus musculus (Mouse).